A 109-amino-acid chain; its full sequence is Hainantoxin-XVIII-2 (109 aa).

A signal peptide spans 1–18; that stretch reads MKLSIIIIATSLVIAVVA. The propeptide occupies 19–46; the sequence is FPSKDSKAIENDKTEQRMEIVVQETARA. 3 disulfide bridges follow: Cys-47–Cys-62, Cys-59–Cys-108, and Cys-61–Cys-81.

Belongs to the neurotoxin 25 family. F7 subfamily. As to expression, expressed by the venom gland.

Its subcellular location is the secreted. In terms of biological role, putative ion channel inhibitor. In Cyriopagopus hainanus (Chinese bird spider), this protein is Hainantoxin-XVIII-2.